The following is a 309-amino-acid chain: tRNA pseudouridine synthase B (309 aa).

The Nucleophile role is filled by aspartate 39. A PUA domain is found at 229 to 306 (LPRVVVHQES…ERVLTLRKVF (78 aa)).

Belongs to the pseudouridine synthase TruB family. Type 1 subfamily.

The catalysed reaction is uridine(55) in tRNA = pseudouridine(55) in tRNA. Responsible for synthesis of pseudouridine from uracil-55 in the psi GC loop of transfer RNAs. This is tRNA pseudouridine synthase B from Thermotoga maritima (strain ATCC 43589 / DSM 3109 / JCM 10099 / NBRC 100826 / MSB8).